Consider the following 165-residue polypeptide: MTTPSPSDRVEIDVEVNGRRRTVAVDARETLADHLRNDQKLTGIKLGCEHGVCGACTILMDGAAVRSCLTLAAQGDGRSIRTVEDLSDGALSPLQEAFKRHHALQCGFCTAGFLMSATELLEANPSPTKEEVIEALSGNLCRCTGYQTIVEAVLDAPGQIGNKNG.

The 2Fe-2S ferredoxin-type domain maps to 10–86 (VEIDVEVNGR…GRSIRTVEDL (77 aa)). Positions 48, 53, 56, and 68 each coordinate [2Fe-2S] cluster.

In terms of assembly, heterotrimer composed of a large subunit (NdhL), a medium subunit (NdhM) and a small subunit (NdhS). [2Fe-2S] cluster is required as a cofactor.

The protein localises to the cytoplasm. The catalysed reaction is (R)-nicotine + A + H2O = (R)-6-hydroxynicotine + AH2. The enzyme catalyses (S)-nicotine + A + H2O = (S)-6-hydroxynicotine + AH2. Its pathway is alkaloid degradation; nicotine degradation; 6-hydroxypseudooxynicotine from nicotine (R-isomer route): step 1/2. It participates in alkaloid degradation; nicotine degradation; 6-hydroxypseudooxynicotine from nicotine (S-isomer route): step 1/2. Nicotine dehydrogenase activity is inhibited by tungsten. In terms of biological role, component of the nicotine 6-hydroxylase, which is involved in the degradation of nicotine. Catalyzes the hydroxylation of the pyridine ring at C6 to form 6-hydroxynicotine. Can use both L-nicotine and D-nicotine. The chain is Nicotine 6-hydroxylase small subunit from Paenarthrobacter nicotinovorans (Arthrobacter nicotinovorans).